Reading from the N-terminus, the 317-residue chain is Ribosomal protein L11 methyltransferase (317 aa).

S-adenosyl-L-methionine contacts are provided by threonine 158, glycine 179, aspartate 201, and asparagine 244.

It belongs to the methyltransferase superfamily. PrmA family.

It localises to the cytoplasm. It carries out the reaction L-lysyl-[protein] + 3 S-adenosyl-L-methionine = N(6),N(6),N(6)-trimethyl-L-lysyl-[protein] + 3 S-adenosyl-L-homocysteine + 3 H(+). Functionally, methylates ribosomal protein L11. The polypeptide is Ribosomal protein L11 methyltransferase (Streptococcus agalactiae serotype Ia (strain ATCC 27591 / A909 / CDC SS700)).